Reading from the N-terminus, the 212-residue chain is DNA-directed RNA polymerase III subunit RPC8 (212 aa).

A Phosphoserine modification is found at serine 162. A compositionally biased stretch (basic and acidic residues) spans 166 to 184; the sequence is RELEERAQLENEIEGKNEE. Positions 166–194 are disordered; the sequence is RELEERAQLENEIEGKNEETPQNEKPPAY.

It belongs to the eukaryotic RPB7/RPC8 RNA polymerase subunit family. As to quaternary structure, component of the RNA polymerase III (Pol III) complex consisting of 17 subunits. RPC25/RPC8 and RPC17/RPC9 form a Pol III subcomplex.

The protein localises to the nucleus. DNA-dependent RNA polymerase catalyzes the transcription of DNA into RNA using the four ribonucleoside triphosphates as substrates. Specific peripheric component of RNA polymerase III which synthesizes small RNAs, such as 5S rRNA and tRNA. The RPC25/RPC8-RPC17/RPC9 subcomplex may bind Pol III transcripts emerging from the adjacent exit pore during elongation. This chain is DNA-directed RNA polymerase III subunit RPC8 (RPC25), found in Saccharomyces cerevisiae (strain ATCC 204508 / S288c) (Baker's yeast).